We begin with the raw amino-acid sequence, 237 residues long: V-type proton ATPase subunit E3 (237 aa).

N-acetylmethionine is present on Met-1. Positions 9-67 (QIQQMVRFIRQEAEEKANEISISSEEEFNIEKLQLVEAEKKKIRQEYEKKEKQVDVRKK) form a coiled coil.

It belongs to the V-ATPase E subunit family. As to quaternary structure, V-ATPase is a heteromultimeric enzyme composed of a peripheral catalytic V1 complex (components A to H) attached to an integral membrane V0 proton pore complex (components: a, c, c'', d and e).

It localises to the vacuole membrane. Its function is as follows. Subunit of the peripheral V1 complex of vacuolar ATPase essential for assembly or catalytic function. V-ATPase is responsible for acidifying a variety of intracellular compartments in eukaryotic cells. The chain is V-type proton ATPase subunit E3 (VHA-E3) from Arabidopsis thaliana (Mouse-ear cress).